Reading from the N-terminus, the 364-residue chain is NADH-quinone oxidoreductase subunit H (364 aa).

Helical transmembrane passes span Ala21–Ala41, Val88–Pro108, Val120–Gly140, Met159–Ser179, Leu208–Glu228, Ile267–Pro287, Phe301–Ala321, and Val340–Pro360.

This sequence belongs to the complex I subunit 1 family. NDH-1 is composed of 14 different subunits. Subunits NuoA, H, J, K, L, M, N constitute the membrane sector of the complex.

It is found in the cell inner membrane. It carries out the reaction a quinone + NADH + 5 H(+)(in) = a quinol + NAD(+) + 4 H(+)(out). Its function is as follows. NDH-1 shuttles electrons from NADH, via FMN and iron-sulfur (Fe-S) centers, to quinones in the respiratory chain. The immediate electron acceptor for the enzyme in this species is believed to be ubiquinone. Couples the redox reaction to proton translocation (for every two electrons transferred, four hydrogen ions are translocated across the cytoplasmic membrane), and thus conserves the redox energy in a proton gradient. This subunit may bind ubiquinone. The chain is NADH-quinone oxidoreductase subunit H from Phenylobacterium zucineum (strain HLK1).